We begin with the raw amino-acid sequence, 160 residues long: tRNA (cytidine(34)-2'-O)-methyltransferase (160 aa).

S-adenosyl-L-methionine contacts are provided by L78, G100, I122, and S130.

It belongs to the class IV-like SAM-binding methyltransferase superfamily. RNA methyltransferase TrmH family. TrmL subfamily. As to quaternary structure, homodimer.

The protein localises to the cytoplasm. It carries out the reaction cytidine(34) in tRNA + S-adenosyl-L-methionine = 2'-O-methylcytidine(34) in tRNA + S-adenosyl-L-homocysteine + H(+). The enzyme catalyses 5-carboxymethylaminomethyluridine(34) in tRNA(Leu) + S-adenosyl-L-methionine = 5-carboxymethylaminomethyl-2'-O-methyluridine(34) in tRNA(Leu) + S-adenosyl-L-homocysteine + H(+). Methylates the ribose at the nucleotide 34 wobble position in the two leucyl isoacceptors tRNA(Leu)(CmAA) and tRNA(Leu)(cmnm5UmAA). Catalyzes the methyl transfer from S-adenosyl-L-methionine to the 2'-OH of the wobble nucleotide. This Haemophilus influenzae (strain ATCC 51907 / DSM 11121 / KW20 / Rd) protein is tRNA (cytidine(34)-2'-O)-methyltransferase.